Reading from the N-terminus, the 194-residue chain is Early growth response protein 1 (194 aa).

3 consecutive C2H2-type zinc fingers follow at residues Cys1–His18, Phe24–His46, and Phe52–His74.

Belongs to the EGR C2H2-type zinc-finger protein family.

Its subcellular location is the nucleus. It localises to the cytoplasm. Its function is as follows. Transcriptional regulator. Recognizes and binds to the DNA sequence 5'-GCG(T/G)GGGCG-3'(EGR-site) in the promoter region of target genes. Binds double-stranded target DNA, irrespective of the cytosine methylation status. Regulates the transcription of numerous target genes, and thereby plays an important role in regulating the response to growth factors, DNA damage, and ischemia. Plays a role in the regulation of cell survival, proliferation and cell death. Mediates responses to ischemia and hypoxia; regulates the expression of proteins that are involved in inflammatory processes. Plays a role in regulating the expression of circadian clock genes. In Gallus gallus (Chicken), this protein is Early growth response protein 1 (EGR1).